We begin with the raw amino-acid sequence, 332 residues long: Putative peptide import ATP-binding protein BruAb2_1033 (332 aa).

Residues 11 to 261 (LEVSNLSVDF…PLHPYTEGLL (251 aa)) form the ABC transporter domain. 47–54 (GESGSGKS) lines the ATP pocket.

Belongs to the ABC transporter superfamily. As to quaternary structure, the complex is composed of two ATP-binding proteins (BruAb2_1033 and BruAb2_1034), two transmembrane proteins (BruAb2_1031 and BruAb2_1032) and a solute-binding protein (BruAb2_1030).

The protein localises to the cell inner membrane. In terms of biological role, probably part of an ABC transporter complex that could be involved in peptide import. Probably responsible for energy coupling to the transport system. The chain is Putative peptide import ATP-binding protein BruAb2_1033 from Brucella abortus biovar 1 (strain 9-941).